We begin with the raw amino-acid sequence, 240 residues long: UDP-2,3-diacylglucosamine hydrolase (240 aa).

Positions 8, 10, 41, 79, and 114 each coordinate Mn(2+). 79–80 is a binding site for substrate; it reads NR. Asp-122, Ser-160, Asn-164, Lys-167, and His-195 together coordinate substrate. Mn(2+)-binding residues include His-195 and His-197.

It belongs to the LpxH family. The cofactor is Mn(2+).

Its subcellular location is the cell inner membrane. The catalysed reaction is UDP-2-N,3-O-bis[(3R)-3-hydroxytetradecanoyl]-alpha-D-glucosamine + H2O = 2-N,3-O-bis[(3R)-3-hydroxytetradecanoyl]-alpha-D-glucosaminyl 1-phosphate + UMP + 2 H(+). Its pathway is glycolipid biosynthesis; lipid IV(A) biosynthesis; lipid IV(A) from (3R)-3-hydroxytetradecanoyl-[acyl-carrier-protein] and UDP-N-acetyl-alpha-D-glucosamine: step 4/6. Its function is as follows. Hydrolyzes the pyrophosphate bond of UDP-2,3-diacylglucosamine to yield 2,3-diacylglucosamine 1-phosphate (lipid X) and UMP by catalyzing the attack of water at the alpha-P atom. Involved in the biosynthesis of lipid A, a phosphorylated glycolipid that anchors the lipopolysaccharide to the outer membrane of the cell. This is UDP-2,3-diacylglucosamine hydrolase from Yersinia pseudotuberculosis serotype O:1b (strain IP 31758).